Here is a 473-residue protein sequence, read N- to C-terminus: Beta-secretase 1 (473 aa).

A signal peptide spans 1 to 21; the sequence is MAPALPWLLLWVGSGVLPVHG. Positions 22-45 are excised as a propeptide; it reads TQDGIRLPLRSGLAGAPLGLRLPR. Residues 22–429 lie on the Extracellular side of the membrane; sequence TQDGIRLPLR…PQTDESTLMT (408 aa). Residues 72-388 enclose the Peptidase A1 domain; that stretch reads YYVEMTVGSP…DRARKRIGFA (317 aa). Residue Asp90 is part of the active site. An N6-acetyllysine modification is found at Lys123. Residues Asn150, Asn169, and Asn195 are each glycosylated (N-linked (GlcNAc...) asparagine). 3 disulfide bridges follow: Cys188-Cys392, Cys250-Cys415, and Cys302-Cys352. Lys247, Lys251, and Lys257 each carry N6-acetyllysine. Asp261 is a catalytic residue. N6-acetyllysine occurs at positions 271, 272, and 279. An N-linked (GlcNAc...) asparagine glycan is attached at Asn326. Residues 430–450 traverse the membrane as a helical segment; sequence IAYVMAAICALFMLPLCLMVC. Residues Cys446, Cys450, Cys454, and Cys457 are each lipidated (S-palmitoyl cysteine). Over 451–473 the chain is Cytoplasmic; sequence QWRCLRCLRHQHDDFADDISLLK. The tract at residues 451 to 473 is interaction with RTN3; the sequence is QWRCLRCLRHQHDDFADDISLLK. A DXXLL motif is present at residues 468 to 472; that stretch reads DISLL. Phosphoserine is present on Ser470. A Glycyl lysine isopeptide (Lys-Gly) (interchain with G-Cter in ubiquitin) cross-link involves residue Lys473.

Belongs to the peptidase A1 family. As to quaternary structure, monomer. Interacts (via DXXLL motif) with GGA1, GGA2 and GGA3 (via their VHS domain); the interaction highly increases when BACE1 is phosphorylated at Ser-470. Interacts with RTN1; RTN2; RTN3 and RTN4; the interaction leads to inhibition of amyloid precursor protein processing. Interacts with SNX6. Interacts with PCSK9. Interacts with NAT8 and NAT8B. Interacts with BIN1. Interacts (via extracellular domain) with ADAM10 (via extracellular domain). Interacts with SORL1; this interaction may affect binding with APP and hence reduce APP cleavage. Interacts with NRDC AND NRG1. Post-translationally, palmitoylation mediates lipid raft localization. In terms of processing, acetylated in the endoplasmic reticulum at Lys-123, Lys-247, Lys-251, Lys-257, Lys-271, Lys-272, and Lys-279. Acetylation by NAT8 and NAT8B is transient and deacetylation probably occurs in the Golgi. Acetylation regulates the maturation, the transport to the plasma membrane, the stability and the expression of the protein. Ubiquitinated at Lys-473, ubiquitination leads to lysosomal degradation. Monoubiquitinated and 'Lys-63'-linked polyubitinated. Deubiquitnated by USP8; inhibits lysosomal degradation. Post-translationally, phosphorylation at Ser-470 is required for interaction with GGA1 and retrograded transport from endosomal compartments to the trans-Golgi network. Non-phosphorylated BACE1 enters a direct recycling route to the cell surface. In terms of processing, N-Glycosylated. Addition of a bisecting N-acetylglucosamine by MGAT3 blocks lysosomal targeting, further degradation and is required for maintaining stability under stress conditions.

It localises to the cell membrane. Its subcellular location is the golgi apparatus. It is found in the trans-Golgi network. The protein resides in the endoplasmic reticulum. The protein localises to the endosome. It localises to the cell surface. Its subcellular location is the cytoplasmic vesicle membrane. It is found in the membrane raft. The protein resides in the lysosome. The protein localises to the late endosome. It localises to the early endosome. Its subcellular location is the recycling endosome. It is found in the cell projection. The protein resides in the axon. The protein localises to the dendrite. The enzyme catalyses Broad endopeptidase specificity. Cleaves Glu-Val-Asn-Leu-|-Asp-Ala-Glu-Phe in the Swedish variant of Alzheimer's amyloid precursor protein.. With respect to regulation, inhibited by RTN3 and RTN4. Responsible for the proteolytic processing of the amyloid precursor protein (APP). Cleaves at the N-terminus of the A-beta peptide sequence, between residues 671 and 672 of APP, leads to the generation and extracellular release of beta-cleaved soluble APP, and a corresponding cell-associated C-terminal fragment which is later released by gamma-secretase. Cleaves CHL1. This Cavia porcellus (Guinea pig) protein is Beta-secretase 1 (BACE1).